The chain runs to 326 residues: NAD kinase (326 aa).

Aspartate 93 (proton acceptor) is an active-site residue. Residues 93–94, arginine 98, 171–172, arginine 182, aspartate 201, and 212–217 contribute to the NAD(+) site; these read DG, NE, and TAHAFS.

Belongs to the NAD kinase family. Requires a divalent metal cation as cofactor.

It is found in the cytoplasm. The catalysed reaction is NAD(+) + ATP = ADP + NADP(+) + H(+). In terms of biological role, involved in the regulation of the intracellular balance of NAD and NADP, and is a key enzyme in the biosynthesis of NADP. Catalyzes specifically the phosphorylation on 2'-hydroxyl of the adenosine moiety of NAD to yield NADP. The polypeptide is NAD kinase (Thermobifida fusca (strain YX)).